The chain runs to 439 residues: Glutamate--tRNA ligase 2 (439 aa).

The short motif at Pro6–Asn16 is the 'HIGH' region element. The 'KMSKS' region signature appears at Lys232–Arg236. Lys235 serves as a coordination point for ATP.

It belongs to the class-I aminoacyl-tRNA synthetase family. Glutamate--tRNA ligase type 1 subfamily. In terms of assembly, monomer.

It localises to the cytoplasm. The enzyme catalyses tRNA(Glu) + L-glutamate + ATP = L-glutamyl-tRNA(Glu) + AMP + diphosphate. Catalyzes the attachment of glutamate to tRNA(Glu) in a two-step reaction: glutamate is first activated by ATP to form Glu-AMP and then transferred to the acceptor end of tRNA(Glu). This is Glutamate--tRNA ligase 2 from Helicobacter pylori (strain Shi470).